Reading from the N-terminus, the 694-residue chain is MSQSKQASILDSRILVPAIADAFKKLNPRTLARNPVMFVVATVSVLTTVLFIRDLITGGANLAFSFQINLWLWFTVLFANFAEAVAEGRGKAQADSLRKTRTETQAKLLNSDDRSQYKMVAGDSLKVNDVVLVEAGDIIPSDGEVIEGVASVNEAAITGESAPVIRESGGDRSAVTGGTQVLSDWIRVRITAAAGSTFLDRMISLVEGAERQKTPNEIALNILLAGMTLIFVLATATIPSFAAYAGGSIPIIVLVALFVTLIPTTIGALLSAIGIAGMDRLVRFNVLAMSGRAVEAAGDVDTLLLDKTGTITLGNRQATDLRPIPGVSEQELADAAQLASLADETPEGRSIVVLAKEKYGIRARDMQKLHATFVPFTAQTRMSGVDFEGASIRKGAVDAVLAYVDGGALQHGNAALALKTETDATRAIRAIAEDIAKAGGTPLAVVRDGKLLGVVQLKDIVKGGIRERFAELRRMGIRTVMITGDNPMTAAAIAAEAGVDDFLAQATPENKLELIREEQAKGKLVAMCGDGTNDAPALAQADVGVAMNTGTVAAREAGNMVDLDSDPTKLIEIVEIGKQLLMTRGALTTFSIANDIAKYFAIIPAMFLALYPQLGVLNVMGLSTPQSAILSAIIFNALIIIALIPLSLKGVKYRPIGAGALLSRNLVIYGLGGIIVPFIGIKLIDLAVTALGLA.

A run of 4 helical transmembrane segments spans residues 36–56, 62–82, 218–238, and 249–269; these read VMFV…RDLI, LAFS…ANFA, IALN…TATI, and IPII…IGAL. Aspartate 306 serves as the catalytic 4-aspartylphosphate intermediate. ATP is bound by residues aspartate 343, glutamate 347, 376–383, and lysine 394; that span reads FTAQTRMS. Mg(2+) contacts are provided by aspartate 530 and aspartate 534. The next 3 helical transmembrane spans lie at 600–620, 628–648, and 666–686; these read FAII…LNVM, AILS…PLSL, and LVIY…LIDL.

The protein belongs to the cation transport ATPase (P-type) (TC 3.A.3) family. Type IA subfamily. In terms of assembly, the system is composed of three essential subunits: KdpA, KdpB and KdpC.

The protein resides in the cell inner membrane. It catalyses the reaction K(+)(out) + ATP + H2O = K(+)(in) + ADP + phosphate + H(+). Functionally, part of the high-affinity ATP-driven potassium transport (or Kdp) system, which catalyzes the hydrolysis of ATP coupled with the electrogenic transport of potassium into the cytoplasm. This subunit is responsible for energy coupling to the transport system and for the release of the potassium ions to the cytoplasm. This Agrobacterium fabrum (strain C58 / ATCC 33970) (Agrobacterium tumefaciens (strain C58)) protein is Potassium-transporting ATPase ATP-binding subunit.